We begin with the raw amino-acid sequence, 251 residues long: Putative ATP-binding protein Rv3427c in insertion sequence (251 aa).

Position 108-115 (108-115 (GPVGVGKT)) interacts with ATP.

This sequence belongs to the IS21/IS1162 putative ATP-binding protein family.

This Mycobacterium tuberculosis (strain ATCC 25618 / H37Rv) protein is Putative ATP-binding protein Rv3427c in insertion sequence.